A 358-amino-acid chain; its full sequence is 3-isopropylmalate dehydrogenase 2 (358 aa).

74–87 (GPKWDKLPAESRPE) provides a ligand contact to NAD(+). Substrate-binding residues include R94, R104, R132, and D221. 3 residues coordinate Mg(2+): D221, D245, and D249. 279 to 291 (GSAPDIAGQGVAN) is a binding site for NAD(+).

This sequence belongs to the isocitrate and isopropylmalate dehydrogenases family. LeuB type 1 subfamily. As to quaternary structure, homodimer. It depends on Mg(2+) as a cofactor. Mn(2+) is required as a cofactor.

The protein localises to the cytoplasm. It catalyses the reaction (2R,3S)-3-isopropylmalate + NAD(+) = 4-methyl-2-oxopentanoate + CO2 + NADH. It functions in the pathway amino-acid biosynthesis; L-leucine biosynthesis; L-leucine from 3-methyl-2-oxobutanoate: step 3/4. In terms of biological role, catalyzes the oxidation of 3-carboxy-2-hydroxy-4-methylpentanoate (3-isopropylmalate) to 3-carboxy-4-methyl-2-oxopentanoate. The product decarboxylates to 4-methyl-2 oxopentanoate. The sequence is that of 3-isopropylmalate dehydrogenase 2 from Dechloromonas aromatica (strain RCB).